The sequence spans 514 residues: Probable type III restriction-modification enzyme HindVIP Res subunit (514 aa).

It belongs to the type III restriction-modification system Res protein family. As to quaternary structure, contains two different subunits: Res and Mod. It depends on Mg(2+) as a cofactor. S-adenosyl-L-methionine serves as cofactor.

The enzyme catalyses Endonucleolytic cleavage of DNA to give specific double-stranded fragments with terminal 5'-phosphates.. In terms of biological role, a type III restriction enzyme that recognizes 2 inversely oriented double-stranded sequences 5'-CGAAT-3' and cleaves 25-27 base pairs downstream. After binding to one recognition site undergoes random one-dimensional diffusion along DNA until it collides with a stationary enzyme bound to the second DNA site, which is when DNA cleavage occurs. DNA restriction requires both the Res and Mod subunits. This Haemophilus influenzae (strain ATCC 51907 / DSM 11121 / KW20 / Rd) protein is Probable type III restriction-modification enzyme HindVIP Res subunit.